Reading from the N-terminus, the 105-residue chain is Large ribosomal subunit protein uL24 (105 aa).

The protein belongs to the universal ribosomal protein uL24 family. Part of the 50S ribosomal subunit.

Its function is as follows. One of two assembly initiator proteins, it binds directly to the 5'-end of the 23S rRNA, where it nucleates assembly of the 50S subunit. Functionally, one of the proteins that surrounds the polypeptide exit tunnel on the outside of the subunit. The polypeptide is Large ribosomal subunit protein uL24 (Chromohalobacter salexigens (strain ATCC BAA-138 / DSM 3043 / CIP 106854 / NCIMB 13768 / 1H11)).